Reading from the N-terminus, the 181-residue chain is uncharacterized protein (181 aa).

It belongs to the M.jannaschii MJ0150/MJ0739/MJ0745/MJ1460/MJ1642 family.

This is an uncharacterized protein from Methanocaldococcus jannaschii (strain ATCC 43067 / DSM 2661 / JAL-1 / JCM 10045 / NBRC 100440) (Methanococcus jannaschii).